The chain runs to 312 residues: Small ribosomal subunit protein RACK1 (312 aa).

7 WD repeats span residues 9–42, 63–93, 105–135, 148–180, 192–222, 233–262, and 279–307; these read GHRG…ISWK, GHTG…RMWD, KHTK…RVWN, GHED…KVWN, GHSN…LLWD, NVES…SVYD, and PSEC…RVWS.

The protein belongs to the WD repeat G protein beta family. Ribosomal protein RACK1 subfamily.

The polypeptide is Small ribosomal subunit protein RACK1 (Leishmania chagasi).